The sequence spans 338 residues: Ketol-acid reductoisomerase (NADP(+)) (338 aa).

The 181-residue stretch at 1 to 181 folds into the KARI N-terminal Rossmann domain; the sequence is MKVFYDKDCD…GGGRTGIIET (181 aa). Residues 24–27, Arg-47, Ser-50, Thr-52, and 82–85 contribute to the NADP(+) site; these read YGSQ and DEFQ. His-107 is an active-site residue. Gly-133 provides a ligand contact to NADP(+). Residues 182-327 form the KARI C-terminal knotted domain; sequence TFKDETETDL…EQLRSMMPWI (146 aa). Mg(2+) is bound by residues Asp-190, Glu-194, Glu-226, and Glu-230. Ser-251 provides a ligand contact to substrate.

The protein belongs to the ketol-acid reductoisomerase family. Mg(2+) serves as cofactor.

It catalyses the reaction (2R)-2,3-dihydroxy-3-methylbutanoate + NADP(+) = (2S)-2-acetolactate + NADPH + H(+). It carries out the reaction (2R,3R)-2,3-dihydroxy-3-methylpentanoate + NADP(+) = (S)-2-ethyl-2-hydroxy-3-oxobutanoate + NADPH + H(+). It functions in the pathway amino-acid biosynthesis; L-isoleucine biosynthesis; L-isoleucine from 2-oxobutanoate: step 2/4. The protein operates within amino-acid biosynthesis; L-valine biosynthesis; L-valine from pyruvate: step 2/4. Functionally, involved in the biosynthesis of branched-chain amino acids (BCAA). Catalyzes an alkyl-migration followed by a ketol-acid reduction of (S)-2-acetolactate (S2AL) to yield (R)-2,3-dihydroxy-isovalerate. In the isomerase reaction, S2AL is rearranged via a Mg-dependent methyl migration to produce 3-hydroxy-3-methyl-2-ketobutyrate (HMKB). In the reductase reaction, this 2-ketoacid undergoes a metal-dependent reduction by NADPH to yield (R)-2,3-dihydroxy-isovalerate. In Pseudomonas fluorescens (strain ATCC BAA-477 / NRRL B-23932 / Pf-5), this protein is Ketol-acid reductoisomerase (NADP(+)).